Here is a 373-residue protein sequence, read N- to C-terminus: Sterol-4-alpha-carboxylate 3-dehydrogenase, decarboxylating (373 aa).

At methionine 1 the chain carries N-acetylmethionine. Residue threonine 22 is modified to Phosphothreonine. The active-site Proton acceptor is tyrosine 172. Lysine 176 contributes to the NAD(+) binding site. A helical transmembrane segment spans residues 298–318 (WVAYYLALLLSLLVMVISPVI). A Prevents secretion from ER motif is present at residues 370-373 (RRVK).

The protein belongs to the 3-beta-HSD family. In terms of assembly, homodimer. As to expression, brain, heart, liver, lung, kidney, skin and placenta.

It localises to the endoplasmic reticulum membrane. The protein localises to the lipid droplet. The catalysed reaction is a 3beta-hydroxysteroid-4alpha-carboxylate + NADP(+) = a 3-oxosteroid + CO2 + NADPH. The enzyme catalyses a 3beta-hydroxysteroid-4alpha-carboxylate + NAD(+) = a 3-oxosteroid + CO2 + NADH. It catalyses the reaction 4alpha-carboxyzymosterol + NADP(+) = zymosterone + CO2 + NADPH. It carries out the reaction 4alpha-carboxy-4beta-methyl-5alpha-cholest-8-en-3beta-ol + NADP(+) = 4alpha-methyl-5alpha-cholest-8-en-3-one + CO2 + NADPH. The catalysed reaction is 4alpha-carboxy-5alpha-cholest-8-ene-3beta-ol + NADP(+) = 5alpha-cholest-8-en-3-one + CO2 + NADPH. The enzyme catalyses 4beta-methylzymosterol-4alpha-carboxylate + NADP(+) = 3-dehydro-4-methylzymosterol + CO2 + NADPH. It catalyses the reaction 4beta-methylzymosterol-4alpha-carboxylate + NAD(+) = 3-dehydro-4-methylzymosterol + CO2 + NADH. It carries out the reaction 4alpha-carboxy-5alpha-cholest-8-ene-3beta-ol + NAD(+) = 5alpha-cholest-8-en-3-one + CO2 + NADH. The catalysed reaction is 4alpha-carboxy-4beta-methyl-5alpha-cholest-8-en-3beta-ol + NAD(+) = 4alpha-methyl-5alpha-cholest-8-en-3-one + CO2 + NADH. The enzyme catalyses 4alpha-carboxyzymosterol + NAD(+) = zymosterone + CO2 + NADH. The protein operates within steroid biosynthesis; zymosterol biosynthesis; zymosterol from lanosterol: step 4/6. In terms of biological role, catalyzes the NAD(P)(+)-dependent oxidative decarboxylation of the C4 methyl groups of 4-alpha-carboxysterols in post-squalene cholesterol biosynthesis. Also plays a role in the regulation of the endocytic trafficking of EGFR. The polypeptide is Sterol-4-alpha-carboxylate 3-dehydrogenase, decarboxylating (NSDHL) (Homo sapiens (Human)).